Reading from the N-terminus, the 217-residue chain is Oxygen-insensitive NAD(P)H nitroreductase (217 aa).

Residue 10 to 14 (RHSTK) coordinates FMN. NAD(+) contacts are provided by Lys14, Thr41, Thr67, Asn71, Lys74, and Arg107. FMN is bound at residue Asn71. FMN is bound by residues 165–166 (EG) and 205–207 (KSR).

This sequence belongs to the nitroreductase family. In terms of assembly, homodimer. FMN serves as cofactor.

Its function is as follows. Reduction of a variety of nitroaromatic compounds using NADH (and to lesser extent NADPH) as source of reducing equivalents; two electrons are transferred. The sequence is that of Oxygen-insensitive NAD(P)H nitroreductase from Enterobacter cloacae.